Consider the following 295-residue polypeptide: Acetyl-coenzyme A carboxylase carboxyl transferase subunit beta (295 aa).

Residues 25-294 (VWTKCTSCEQ…PFNAEELSDT (270 aa)) enclose the CoA carboxyltransferase N-terminal domain. Zn(2+) is bound by residues Cys29, Cys32, Cys48, and Cys51. The C4-type zinc-finger motif lies at 29–51 (CTSCEQVLYRDELKRHLEVCPKC).

Belongs to the AccD/PCCB family. In terms of assembly, acetyl-CoA carboxylase is a heterohexamer composed of biotin carboxyl carrier protein (AccB), biotin carboxylase (AccC) and two subunits each of ACCase subunit alpha (AccA) and ACCase subunit beta (AccD). Zn(2+) serves as cofactor.

Its subcellular location is the cytoplasm. The enzyme catalyses N(6)-carboxybiotinyl-L-lysyl-[protein] + acetyl-CoA = N(6)-biotinyl-L-lysyl-[protein] + malonyl-CoA. The protein operates within lipid metabolism; malonyl-CoA biosynthesis; malonyl-CoA from acetyl-CoA: step 1/1. Component of the acetyl coenzyme A carboxylase (ACC) complex. Biotin carboxylase (BC) catalyzes the carboxylation of biotin on its carrier protein (BCCP) and then the CO(2) group is transferred by the transcarboxylase to acetyl-CoA to form malonyl-CoA. This is Acetyl-coenzyme A carboxylase carboxyl transferase subunit beta from Mannheimia succiniciproducens (strain KCTC 0769BP / MBEL55E).